A 493-amino-acid polypeptide reads, in one-letter code: Growth-regulating factor 8 (493 aa).

The QLQ domain maps to alanine 149–lysine 184. A WRC domain is found at aspartate 243–serine 287. 2 consecutive short sequence motifs (bipartite nuclear localization signal) follow at residues arginine 248 to arginine 258 and lysine 276 to lysine 283. Residues cysteine 270 to asparagine 302 are disordered. Residues histidine 273–lysine 283 show a composition bias toward basic residues.

The protein belongs to the GRF family. In terms of tissue distribution, predominantly expressed in shoot tips and flowers.

It is found in the nucleus. In terms of biological role, transcription activator that plays a role in the regulation of cell expansion in leaf and cotyledons tissues. Component of a network formed by miR396, the GRFs and their interacting factors (GIFs) acting in the regulation of meristem function, at least partially through the control of cell proliferation. This chain is Growth-regulating factor 8 (GRF8), found in Arabidopsis thaliana (Mouse-ear cress).